The primary structure comprises 287 residues: Ribosomal RNA small subunit methyltransferase I (287 aa).

The protein belongs to the methyltransferase superfamily. RsmI family.

The protein localises to the cytoplasm. The catalysed reaction is cytidine(1402) in 16S rRNA + S-adenosyl-L-methionine = 2'-O-methylcytidine(1402) in 16S rRNA + S-adenosyl-L-homocysteine + H(+). Functionally, catalyzes the 2'-O-methylation of the ribose of cytidine 1402 (C1402) in 16S rRNA. The sequence is that of Ribosomal RNA small subunit methyltransferase I from Streptococcus pyogenes serotype M1.